The following is a 393-amino-acid chain: Pigment production hydroxylase (393 aa).

Involved in pigment production acting as a hydroxylase that transforms indole to indoxyl, resulting in the formation of indigo. The sequence is that of Pigment production hydroxylase from Rhodococcus erythropolis (Arthrobacter picolinophilus).